The sequence spans 619 residues: Kinesin light chain 4 (619 aa).

Ser-2 is modified (N-acetylserine). A coiled-coil region spans residues 32–150; that stretch reads GLESLHSEHQ…EEEKKHLEFL (119 aa). One copy of the TPR 1 repeat lies at 55 to 88; it reads QQGGHEEGLVHEKARQLRRSMENIELGLSEAQVM. Over residues 156–175 the composition is skewed to basic and acidic residues; that stretch reads YDEDGHSMEEKEGDASKDSL. The interval 156-200 is disordered; it reads YDEDGHSMEEKEGDASKDSLDDLFPNEEEEDSSNDLSRGQGAAAA. Residue Ser-174 is modified to Phosphoserine. A compositionally biased stretch (acidic residues) spans 179–188; the sequence is FPNEEEEDSS. TPR repeat units lie at residues 211 to 244, 253 to 286, 295 to 328, 337 to 370, and 379 to 412; these read LRTLHNLVIQYAAQGRYEVAVPLCKQALEDLERT, ATMLNILALVYRDQNKYKEAAHLLNDALSIREST, AATLNNLAVLYGKRGKYKEAEPLCQRALEIREKV, AKQLNNLALLCQNQGKYEAVERYYQRALAIYERQ, and ARTKNNLASCYLKQGKYSEAETLYKEILTRAHVQ. Position 460 is a phosphoserine (Ser-460). The TPR 7 repeat unit spans residues 464–497; sequence NTTLRNLGALYRRQGKLEAAETLEECALRSRKQG. Phosphoserine occurs at positions 565, 566, and 590. Positions 571-619 are disordered; sequence RKLQGTEPRPSSSNMKRAASLNYLNQPNAAPLQTSRGLSASTVDLSSSS. Polar residues predominate over residues 592-608; sequence NYLNQPNAAPLQTSRGL. Over residues 609 to 619 the composition is skewed to low complexity; sequence SASTVDLSSSS. A Phosphothreonine modification is found at Thr-612.

It belongs to the kinesin light chain family. In terms of assembly, oligomeric complex composed of two heavy chains and two light chains.

The protein localises to the cytoplasm. It localises to the cytoskeleton. Functionally, kinesin is a microtubule-associated force-producing protein that may play a role in organelle transport. The light chain may function in coupling of cargo to the heavy chain or in the modulation of its ATPase activity. This is Kinesin light chain 4 (Klc4) from Rattus norvegicus (Rat).